The sequence spans 115 residues: MSGDTGTTSVAPPPGETEPGHGVRIVVEYCEPCGFEATYLELASAVKEQYPGIEIESRLGGTGAFEIEINGQLVFSKLENGGFPYEKDLIEAIRRASNGEPLEKITNSRPPCVIL.

Positions 1–10 (MSGDTGTTSV) are enriched in polar residues. Residues 1 to 22 (MSGDTGTTSVAPPPGETEPGHG) form a disordered region. Ser2 carries the N-acetylserine modification. An intrachain disulfide couples Cys30 to Cys33. Residue Cys112 is the site of S-geranylgeranyl cysteine attachment. A propeptide spans 113-115 (VIL) (removed in mature form).

Belongs to the SelWTH family. As to quaternary structure, interacts with GPX1. Isoprenylation facilitates association with the plasma membrane and enhances the migratory phenotype of cells by inducing increased filopodia formation.

It is found in the cytoplasm. The protein resides in the cytosol. The protein localises to the cell membrane. Increases cell migration by inducing filopodia formation at the leading edge of migrating cells. Plays a role in regulation of apoptosis, possibly through control of CASP3. May be involved in a redox-related process. The chain is Migration and invasion enhancer 1 (MIEN1) from Bos taurus (Bovine).